The sequence spans 124 residues: Profilin-2 (124 aa).

It belongs to the profilin family. Occurs in many kinds of cells as a complex with monomeric actin in a 1:1 ratio. Interacts with forH.

The protein resides in the cytoplasm. It localises to the cytoskeleton. Functionally, binds to actin and affects the structure of the cytoskeleton. At high concentrations, profilin prevents the polymerization of actin, whereas it enhances it at low concentrations. By binding to PIP2, it inhibits the formation of IP3 and DG. The protein is Profilin-2 (proB) of Dictyostelium discoideum (Social amoeba).